Reading from the N-terminus, the 372-residue chain is tRNA-specific 2-thiouridylase MnmA (372 aa).

ATP-binding positions include 16–23 (GMSGGVDS) and methionine 42. An interaction with target base in tRNA region spans residues 102–104 (NPD). Cysteine 107 functions as the Nucleophile in the catalytic mechanism. The cysteines at positions 107 and 205 are disulfide-linked. Glycine 132 lines the ATP pocket. Residues 155-157 (KDQ) form an interaction with tRNA region. The active-site Cysteine persulfide intermediate is the cysteine 205. Residues 317–318 (RY) are interaction with tRNA.

This sequence belongs to the MnmA/TRMU family.

The protein resides in the cytoplasm. It carries out the reaction S-sulfanyl-L-cysteinyl-[protein] + uridine(34) in tRNA + AH2 + ATP = 2-thiouridine(34) in tRNA + L-cysteinyl-[protein] + A + AMP + diphosphate + H(+). Functionally, catalyzes the 2-thiolation of uridine at the wobble position (U34) of tRNA, leading to the formation of s(2)U34. The sequence is that of tRNA-specific 2-thiouridylase MnmA from Shewanella oneidensis (strain ATCC 700550 / JCM 31522 / CIP 106686 / LMG 19005 / NCIMB 14063 / MR-1).